Reading from the N-terminus, the 393-residue chain is Iripin-5 (393 aa).

The first 16 residues, Met1–Ala16, serve as a signal peptide directing secretion. 2 N-linked (GlcNAc...) asparagine glycosylation sites follow: Asn198 and Asn245.

The protein belongs to the serpin family. Highly expressed in female salivary gland during blood feeding. Expressed in female midgut and ovary during blood feeding.

The protein localises to the secreted. Its function is as follows. Serine protease inhibitor that modulates blood feeding of ticks on vertebrate species. Inhibits host neutrophil elastase (ELANE) and proteinase 3/myeloblastin (PRTN3). Moderately inhibits host chymase, cathepsin G (CTSG), trypsin and alpha-chymotrypsin. Decreases host neutrophil migration. Decreases nitric oxide production by host macrophages. Decreases host complement activity. The sequence is that of Iripin-5 from Ixodes ricinus (Common tick).